The chain runs to 139 residues: Putative pre-16S rRNA nuclease (139 aa).

It belongs to the YqgF nuclease family.

It localises to the cytoplasm. In terms of biological role, could be a nuclease involved in processing of the 5'-end of pre-16S rRNA. This Dictyoglomus thermophilum (strain ATCC 35947 / DSM 3960 / H-6-12) protein is Putative pre-16S rRNA nuclease.